The sequence spans 243 residues: Venom protease (243 aa).

Positions 1 to 243 (VVGGKPAKLG…DSFILPALKK (243 aa)) constitute a Peptidase S1 domain. Residues cysteine 34 and cysteine 50 are joined by a disulfide bond. Active-site charge relay system residues include histidine 49 and aspartate 97. Disulfide bonds link cysteine 165-cysteine 178 and cysteine 189-cysteine 217. The Charge relay system role is filled by serine 193.

This sequence belongs to the peptidase S1 family. In terms of tissue distribution, expressed by the venom duct.

The protein resides in the secreted. This Bombus pensylvanicus (American bumblebee) protein is Venom protease.